Here is a 375-residue protein sequence, read N- to C-terminus: Actin, cytoplasmic (375 aa).

The protein belongs to the actin family.

It localises to the cytoplasm. Its subcellular location is the cytoskeleton. The enzyme catalyses ATP + H2O = ADP + phosphate + H(+). Functionally, actins are highly conserved proteins that are involved in various types of cell motility and are ubiquitously expressed in all eukaryotic cells. In Oxytricha trifallax (Sterkiella histriomuscorum), this protein is Actin, cytoplasmic.